The following is a 518-amino-acid chain: GMP synthase [glutamine-hydrolyzing] (518 aa).

Residues 13–203 (KIIVLDFGSQ…ALNVCGCKGD (191 aa)) form the Glutamine amidotransferase type-1 domain. Residue Cys-90 is the Nucleophile of the active site. Active-site residues include His-177 and Glu-179. The region spanning 204–393 (WTMENFSEVE…LGMPDAIVWR (190 aa)) is the GMPS ATP-PPase domain. 231–237 (SGGVDSS) contributes to the ATP binding site.

As to quaternary structure, homodimer.

It carries out the reaction XMP + L-glutamine + ATP + H2O = GMP + L-glutamate + AMP + diphosphate + 2 H(+). The protein operates within purine metabolism; GMP biosynthesis; GMP from XMP (L-Gln route): step 1/1. Its function is as follows. Catalyzes the synthesis of GMP from XMP. The polypeptide is GMP synthase [glutamine-hydrolyzing] (Listeria monocytogenes serovar 1/2a (strain ATCC BAA-679 / EGD-e)).